The chain runs to 537 residues: Protein disulfide isomerase-like 1-5 (537 aa).

Positions 1–29 (MSLIPKPISKVSTFTFILLILLSFTIIIA) are cleaved as a signal peptide. Residues 58–184 (LQEDRPEQQS…IVIWVQKKTG (127 aa)) form the Thioredoxin 1 domain. The Nucleophile role is filled by Cys106. Asn160, Asn364, and Asn416 each carry an N-linked (GlcNAc...) asparagine glycan. The region spanning 380 to 526 (LLESDPSPNS…IAVFINEELL (147 aa)) is the Thioredoxin 2 domain. Residues Cys447 and Cys450 each act as nucleophile in the active site. Residues Cys447 and Cys450 are joined by a disulfide bond. Asn530 carries N-linked (GlcNAc...) asparagine glycosylation. Positions 534 to 537 (KDEL) match the Prevents secretion from ER motif.

The protein belongs to the protein disulfide isomerase family. As to expression, widely expressed.

Its subcellular location is the endoplasmic reticulum lumen. The enzyme catalyses Catalyzes the rearrangement of -S-S- bonds in proteins.. In terms of biological role, acts as a protein-folding catalyst that interacts with nascent polypeptides to catalyze the formation, isomerization, and reduction or oxidation of disulfide bonds. This Arabidopsis thaliana (Mouse-ear cress) protein is Protein disulfide isomerase-like 1-5 (PDIL1-5).